We begin with the raw amino-acid sequence, 159 residues long: Eukaryotic translation initiation factor 5A-1 (159 aa).

Basic and acidic residues predominate over residues 1 to 12 (MSDEEHHFESKA). Residues 1–23 (MSDEEHHFESKADAGASKTYPQQ) form a disordered region. K52 carries the post-translational modification Hypusine.

This sequence belongs to the eIF-5A family. Post-translationally, lys-52 undergoes hypusination, a unique post-translational modification that consists in the addition of a butylamino group from spermidine to lysine side chain, leading to the formation of the unusual amino acid hypusine. eIF-5As are the only known proteins to undergo this modification, which is essential for their function.

Translation factor that promotes translation elongation and termination, particularly upon ribosome stalling at specific amino acid sequence contexts. Binds between the exit (E) and peptidyl (P) site of the ribosome and promotes rescue of stalled ribosome: specifically required for efficient translation of polyproline-containing peptides as well as other motifs that stall the ribosome. Acts as a ribosome quality control (RQC) cofactor by joining the RQC complex to facilitate peptidyl transfer during CAT tailing step. The protein is Eukaryotic translation initiation factor 5A-1 of Solanum lycopersicum (Tomato).